Reading from the N-terminus, the 220-residue chain is Deoxyribose-phosphate aldolase (220 aa).

The active-site Proton donor/acceptor is Asp-89. Lys-152 functions as the Schiff-base intermediate with acetaldehyde in the catalytic mechanism. Lys-181 (proton donor/acceptor) is an active-site residue.

This sequence belongs to the DeoC/FbaB aldolase family. DeoC type 1 subfamily.

Its subcellular location is the cytoplasm. It carries out the reaction 2-deoxy-D-ribose 5-phosphate = D-glyceraldehyde 3-phosphate + acetaldehyde. The protein operates within carbohydrate degradation; 2-deoxy-D-ribose 1-phosphate degradation; D-glyceraldehyde 3-phosphate and acetaldehyde from 2-deoxy-alpha-D-ribose 1-phosphate: step 2/2. Functionally, catalyzes a reversible aldol reaction between acetaldehyde and D-glyceraldehyde 3-phosphate to generate 2-deoxy-D-ribose 5-phosphate. This is Deoxyribose-phosphate aldolase from Enterococcus faecalis (strain ATCC 700802 / V583).